The primary structure comprises 185 residues: Ribosome-recycling factor (185 aa).

It belongs to the RRF family.

It localises to the cytoplasm. Functionally, responsible for the release of ribosomes from messenger RNA at the termination of protein biosynthesis. May increase the efficiency of translation by recycling ribosomes from one round of translation to another. The protein is Ribosome-recycling factor of Halothermothrix orenii (strain H 168 / OCM 544 / DSM 9562).